The chain runs to 486 residues: O-methyltransferase gedA (486 aa).

S-adenosyl-L-methionine contacts are provided by residues 298–299 (GG), Asp321, 353–354 (SF), and Arg369. The active-site Proton acceptor is the His373.

Belongs to the class I-like SAM-binding methyltransferase superfamily. Cation-independent O-methyltransferase family.

It catalyses the reaction emodin + S-adenosyl-L-methionine = questin + S-adenosyl-L-homocysteine + H(+). The protein operates within secondary metabolite biosynthesis. Functionally, O-methyltransferase; part of the gene cluster that mediates the biosynthesis of geodin, an intermediate in the biosynthesis of other natural products. The pathway begins with the synthesis of atrochrysone thioester by the polyketide synthase (PKS) gedC. The atrochrysone carboxyl ACP thioesterase gedB then breaks the thioester bond and releases the atrochrysone carboxylic acid from gedC. The atrochrysone carboxylic acid is then converted to atrochrysone which is further transformed into emodinanthrone. The next step is performed by the emodinanthrone oxygenase gedH that catalyzes the oxidation of emodinanthrone to emodin. Emodin O-methyltransferase encoded probably by gedA then catalyzes methylation of the 8-hydroxy group of emodin to form questin. Ring cleavage of questin by questin oxidase gedK leads to desmethylsulochrin via several intermediates including questin epoxide. Another methylation step probably catalyzed by methyltransferase gedG leads to the formation of sulochrin which is further converted to dihydrogeodin by the sulochrin halogenase gedL. Finally, the dihydrogeodin oxidase gedJ catalyzes the stereospecific phenol oxidative coupling reaction converting dihydrogeodin to geodin. This chain is O-methyltransferase gedA, found in Aspergillus terreus (strain NIH 2624 / FGSC A1156).